Here is a 150-residue protein sequence, read N- to C-terminus: Large ribosomal subunit protein bL9 (150 aa).

Belongs to the bacterial ribosomal protein bL9 family.

Functionally, binds to the 23S rRNA. This chain is Large ribosomal subunit protein bL9, found in Pectobacterium atrosepticum (strain SCRI 1043 / ATCC BAA-672) (Erwinia carotovora subsp. atroseptica).